A 514-amino-acid chain; its full sequence is 2-isopropylmalate synthase (514 aa).

Residues 5-268 (LIIFDTTLRD…DVGIDTTQIV (264 aa)) enclose the Pyruvate carboxyltransferase domain. Residues Asp14, His202, His204, and Asn239 each coordinate Mn(2+). Residues 395-514 (KFVSLSQHSE…KDDKLNPQRS (120 aa)) form a regulatory domain region.

Belongs to the alpha-IPM synthase/homocitrate synthase family. LeuA type 1 subfamily. Homodimer. The cofactor is Mn(2+).

It is found in the cytoplasm. It catalyses the reaction 3-methyl-2-oxobutanoate + acetyl-CoA + H2O = (2S)-2-isopropylmalate + CoA + H(+). It participates in amino-acid biosynthesis; L-leucine biosynthesis; L-leucine from 3-methyl-2-oxobutanoate: step 1/4. Its function is as follows. Catalyzes the condensation of the acetyl group of acetyl-CoA with 3-methyl-2-oxobutanoate (2-ketoisovalerate) to form 3-carboxy-3-hydroxy-4-methylpentanoate (2-isopropylmalate). The protein is 2-isopropylmalate synthase of Burkholderia multivorans (strain ATCC 17616 / 249).